Reading from the N-terminus, the 104-residue chain is Translation initiation factor 1A (104 aa).

Low complexity predominate over residues methionine 1–valine 14. The segment at methionine 1 to asparagine 20 is disordered. An S1-like domain is found at threonine 12–threonine 87.

This sequence belongs to the eIF-1A family.

Its function is as follows. Seems to be required for maximal rate of protein biosynthesis. Enhances ribosome dissociation into subunits and stabilizes the binding of the initiator Met-tRNA(I) to 40 S ribosomal subunits. The protein is Translation initiation factor 1A of Methanococcus maripaludis (strain DSM 14266 / JCM 13030 / NBRC 101832 / S2 / LL).